We begin with the raw amino-acid sequence, 424 residues long: 3-isopropylmalate dehydratase large subunit (424 aa).

[4Fe-4S] cluster-binding residues include C299, C359, and C362.

The protein belongs to the aconitase/IPM isomerase family. LeuC type 2 subfamily. Heterodimer of LeuC and LeuD. The cofactor is [4Fe-4S] cluster.

The enzyme catalyses (2R,3S)-3-isopropylmalate = (2S)-2-isopropylmalate. Its pathway is amino-acid biosynthesis; L-leucine biosynthesis; L-leucine from 3-methyl-2-oxobutanoate: step 2/4. Functionally, catalyzes the isomerization between 2-isopropylmalate and 3-isopropylmalate, via the formation of 2-isopropylmaleate. The polypeptide is 3-isopropylmalate dehydratase large subunit (Hydrogenobaculum sp. (strain Y04AAS1)).